A 325-amino-acid polypeptide reads, in one-letter code: Serpentine receptor class delta-59 (325 aa).

Transmembrane regions (helical) follow at residues tryptophan 14–isoleucine 34, leucine 45–leucine 65, isoleucine 75–isoleucine 95, tyrosine 97–phenylalanine 117, threonine 132–threonine 152, phenylalanine 190–isoleucine 210, threonine 235–phenylalanine 255, and isoleucine 275–valine 295.

Belongs to the nematode receptor-like protein srd family.

The protein localises to the membrane. This chain is Serpentine receptor class delta-59 (srd-59), found in Caenorhabditis elegans.